The chain runs to 546 residues: Chaperonin GroEL 2 (546 aa).

Residues 30–33, Lys-51, 87–91, Gly-415, and Asp-495 contribute to the ATP site; these read TLGP and DGTTT. Positions 527 to 546 are disordered; the sequence is DAAPATAPGGPGAGGPGFDF. Residues 535–546 show a composition bias toward gly residues; the sequence is GGPGAGGPGFDF.

The protein belongs to the chaperonin (HSP60) family. As to quaternary structure, forms a cylinder of 14 subunits composed of two heptameric rings stacked back-to-back. Interacts with the co-chaperonin GroES.

It is found in the cytoplasm. The enzyme catalyses ATP + H2O + a folded polypeptide = ADP + phosphate + an unfolded polypeptide.. Together with its co-chaperonin GroES, plays an essential role in assisting protein folding. The GroEL-GroES system forms a nano-cage that allows encapsulation of the non-native substrate proteins and provides a physical environment optimized to promote and accelerate protein folding. The polypeptide is Chaperonin GroEL 2 (Burkholderia ambifaria (strain ATCC BAA-244 / DSM 16087 / CCUG 44356 / LMG 19182 / AMMD) (Burkholderia cepacia (strain AMMD))).